The sequence spans 566 residues: Mucolipin-2 (566 aa).

The Cytoplasmic segment spans residues 1–65 (MPGDEETLDL…YRARRQIPWK (65 aa)). A helical transmembrane segment spans residues 66-86 (LGLQILKIVMVTTQLVRFGLS). The Extracellular segment spans residues 87 to 288 (NQLVVAFKED…ISGSTQRSTH (202 aa)). The extracellular/lumenal pore loop stretch occupies residues 107–123 (KGFSGVDEDDYSCSIYT). Disulfide bonds link C164–C190 and C243–C274. The helical transmembrane segment at 289–309 (YLLVFDVFVIMICLASLILCT) threads the bilayer. The Cytoplasmic portion of the chain corresponds to 310–346 (RSIVLALRLRKRFLNFFLEKYKQRVCGADQWEFVNGW). A helical membrane pass occupies residues 347-367 (YVLVTISDLMTIIGSILKMEI). Residues 368-376 (KAKKLTNYD) are Extracellular-facing. A helical transmembrane segment spans residues 377–397 (VCSILLGTSTLFVWVGVIRYL). The Cytoplasmic segment spans residues 398-419 (GYFQTYNVLILTMQASLPKVLR). A helical transmembrane segment spans residues 420 to 440 (FCACAGMIYLGYTFCGWIVLG). Topologically, residues 441-448 (PYHEKFEN) are extracellular. The segment at residues 449–469 (LNIVAECLFSLVNGDDMFATF) is an intramembrane region (pore-forming). The short motif at 461-464 (NGDD) is the Selectivity filter element. Over 470–480 (AQIQQKSILVW) the chain is Extracellular. Residues 481-502 (LFSRLYLYSFISLFIYMVLSLF) form a helical membrane-spanning segment. Over 503 to 566 (IALITDSYHT…RSNDHLILID (64 aa)) the chain is Cytoplasmic.

The protein belongs to the transient receptor (TC 1.A.4) family. Polycystin subfamily. MCOLN2 sub-subfamily. Forms homooligomeric complexes; probably tetrameric. Can heterooligomerize with MCOLN1; heteromeric assemblies have different channel properties as compared to the respective homooligomers and may be tissue-specific. Interacts with TMEM176A. In terms of tissue distribution, expressed in activated macrophages and microglia (at protein level). As to expression, isoform 1 is widely expressed at very low levels. Isoform 2 is expressed at high levels in lymphoid tissues (thymus and spleen) and kidney, and at moderate levels in heart, lung, liver and stomach.

The protein resides in the cell membrane. It is found in the lysosome membrane. The protein localises to the recycling endosome membrane. It carries out the reaction Ca(2+)(in) = Ca(2+)(out). The catalysed reaction is Fe(2+)(in) = Fe(2+)(out). With respect to regulation, fe(2+) channel activity is potentiated by low pH. Its function is as follows. Nonselective cation channel probably playing a role in the regulation of membrane trafficking events. Acts as a Ca(2+)-permeable cation channel with inwardly rectifying activity. May activate ARF6 and be involved in the trafficking of GPI-anchored cargo proteins to the cell surface via the ARF6-regulated recycling pathway. May play a role in immune processes. In adaptive immunity, TRPML2 and TRPML1 may play redundant roles in the function of the specialized lysosomes of B cells. In the innate immune response, may play a role in the regulation of chemokine secretion and macrophage migration. Through a possible and probably tissue-specific heteromerization with MCOLN1 may be at least in part involved in many lysosome-dependent cellular events. Also functions as a Fe(2+) permeable channel. The polypeptide is Mucolipin-2 (Mcoln2) (Mus musculus (Mouse)).